The chain runs to 202 residues: Endoribonuclease YbeY (202 aa).

Histidine 120, histidine 124, and histidine 130 together coordinate Zn(2+).

It belongs to the endoribonuclease YbeY family. It depends on Zn(2+) as a cofactor.

It is found in the cytoplasm. Single strand-specific metallo-endoribonuclease involved in late-stage 70S ribosome quality control and in maturation of the 3' terminus of the 16S rRNA. In Corynebacterium kroppenstedtii (strain DSM 44385 / JCM 11950 / CIP 105744 / CCUG 35717), this protein is Endoribonuclease YbeY.